A 401-amino-acid polypeptide reads, in one-letter code: Acetate kinase (401 aa).

Asparagine 7 provides a ligand contact to Mg(2+). Lysine 14 contacts ATP. Residue arginine 91 coordinates substrate. The Proton donor/acceptor role is filled by aspartate 148. Residues 208 to 212, 283 to 285, and 332 to 336 contribute to the ATP site; these read HLGNG, DFR, and GVGEN. Mg(2+) is bound at residue glutamate 385.

It belongs to the acetokinase family. Homodimer. The cofactor is Mg(2+). Requires Mn(2+) as cofactor.

It localises to the cytoplasm. The enzyme catalyses acetate + ATP = acetyl phosphate + ADP. The protein operates within metabolic intermediate biosynthesis; acetyl-CoA biosynthesis; acetyl-CoA from acetate: step 1/2. Functionally, catalyzes the formation of acetyl phosphate from acetate and ATP. Can also catalyze the reverse reaction. In Thermoanaerobacter pseudethanolicus (strain ATCC 33223 / 39E) (Clostridium thermohydrosulfuricum), this protein is Acetate kinase.